A 307-amino-acid chain; its full sequence is Methionyl-tRNA formyltransferase (307 aa).

Position 110–113 (110–113) interacts with (6S)-5,6,7,8-tetrahydrofolate; sequence SLLP.

Belongs to the Fmt family.

The enzyme catalyses L-methionyl-tRNA(fMet) + (6R)-10-formyltetrahydrofolate = N-formyl-L-methionyl-tRNA(fMet) + (6S)-5,6,7,8-tetrahydrofolate + H(+). Attaches a formyl group to the free amino group of methionyl-tRNA(fMet). The formyl group appears to play a dual role in the initiator identity of N-formylmethionyl-tRNA by promoting its recognition by IF2 and preventing the misappropriation of this tRNA by the elongation apparatus. This chain is Methionyl-tRNA formyltransferase, found in Rhodococcus erythropolis (strain PR4 / NBRC 100887).